The chain runs to 229 residues: Dephospho-CoA kinase (229 aa).

A DPCK domain is found at 3–203 (TVGLTGGIGS…ARRDAKATAK (201 aa)). 11–16 (GSGKSA) provides a ligand contact to ATP. Residues 203 to 229 (KATAKAETVASGTDTAASGTDTAAPAG) form a disordered region.

It belongs to the CoaE family.

It localises to the cytoplasm. It catalyses the reaction 3'-dephospho-CoA + ATP = ADP + CoA + H(+). The protein operates within cofactor biosynthesis; coenzyme A biosynthesis; CoA from (R)-pantothenate: step 5/5. Its function is as follows. Catalyzes the phosphorylation of the 3'-hydroxyl group of dephosphocoenzyme A to form coenzyme A. This chain is Dephospho-CoA kinase, found in Frankia casuarinae (strain DSM 45818 / CECT 9043 / HFP020203 / CcI3).